Reading from the N-terminus, the 254-residue chain is Aspartate/glutamate leucyltransferase (254 aa).

It belongs to the R-transferase family. Bpt subfamily.

The protein localises to the cytoplasm. The enzyme catalyses N-terminal L-glutamyl-[protein] + L-leucyl-tRNA(Leu) = N-terminal L-leucyl-L-glutamyl-[protein] + tRNA(Leu) + H(+). It catalyses the reaction N-terminal L-aspartyl-[protein] + L-leucyl-tRNA(Leu) = N-terminal L-leucyl-L-aspartyl-[protein] + tRNA(Leu) + H(+). Its function is as follows. Functions in the N-end rule pathway of protein degradation where it conjugates Leu from its aminoacyl-tRNA to the N-termini of proteins containing an N-terminal aspartate or glutamate. In Maricaulis maris (strain MCS10) (Caulobacter maris), this protein is Aspartate/glutamate leucyltransferase.